The sequence spans 436 residues: uncharacterized protein (436 aa).

This is an uncharacterized protein from Treponema pallidum (strain Nichols).